The chain runs to 144 residues: Benzoylsuccinyl-CoA thiolase subunit BbsA (144 aa).

Zn(2+)-binding residues include cysteine 40, cysteine 43, cysteine 54, and cysteine 57.

The protein belongs to the BbsA family. In terms of assembly, heterotetramer composed of two BbsA subunits and two BbsB subunits. BbsA forms homodimeric subcomplexes. Both BbsA and BbsB are essential for enzymatic activity.

It carries out the reaction (S)-2-benzoylsuccinyl-CoA + CoA = benzoyl-CoA + succinyl-CoA. The protein operates within xenobiotic degradation; toluene degradation. Functionally, component of the BbsAB thiolase complex, which catalyzes the thiolytic cleavage of (S)-2-benzoylsuccinyl-CoA to succinyl-CoA and benzoyl-CoA, the final step of anaerobic toluene metabolism. The BbsA subunit critically contributes to an induced-fit process for productive binding of a CoA substrate into the active site of BbsB. This Thauera aromatica protein is Benzoylsuccinyl-CoA thiolase subunit BbsA.